The primary structure comprises 63 residues: Cytochrome c oxidase subunit 7C, mitochondrial (63 aa).

A mitochondrion-targeting transit peptide spans 1–16 (MWGQGVRRFTTSVVRR). Topologically, residues 17 to 33 (SHYEEGPGKNLPFSVEN) are mitochondrial matrix. At K25 the chain carries N6-acetyllysine; alternate. K25 carries the N6-succinyllysine; alternate modification. The chain crosses the membrane as a helical span at residues 34–60 (KWRLLAMMTLYLGSGFAAPFFIVRHQL). The Mitochondrial intermembrane segment spans residues 61–63 (LKK).

Belongs to the cytochrome c oxidase VIIc family. As to quaternary structure, component of the cytochrome c oxidase (complex IV, CIV), a multisubunit enzyme composed of 14 subunits. The complex is composed of a catalytic core of 3 subunits MT-CO1, MT-CO2 and MT-CO3, encoded in the mitochondrial DNA, and 11 supernumerary subunits COX4I, COX5A, COX5B, COX6A, COX6B, COX6C, COX7A, COX7B, COX7C, COX8 and NDUFA4, which are encoded in the nuclear genome. The complex exists as a monomer or a dimer and forms supercomplexes (SCs) in the inner mitochondrial membrane with NADH-ubiquinone oxidoreductase (complex I, CI) and ubiquinol-cytochrome c oxidoreductase (cytochrome b-c1 complex, complex III, CIII), resulting in different assemblies (supercomplex SCI(1)III(2)IV(1) and megacomplex MCI(2)III(2)IV(2)). Interacts with RAB5IF.

Its subcellular location is the mitochondrion inner membrane. It participates in energy metabolism; oxidative phosphorylation. Its function is as follows. Component of the cytochrome c oxidase, the last enzyme in the mitochondrial electron transport chain which drives oxidative phosphorylation. The respiratory chain contains 3 multisubunit complexes succinate dehydrogenase (complex II, CII), ubiquinol-cytochrome c oxidoreductase (cytochrome b-c1 complex, complex III, CIII) and cytochrome c oxidase (complex IV, CIV), that cooperate to transfer electrons derived from NADH and succinate to molecular oxygen, creating an electrochemical gradient over the inner membrane that drives transmembrane transport and the ATP synthase. Cytochrome c oxidase is the component of the respiratory chain that catalyzes the reduction of oxygen to water. Electrons originating from reduced cytochrome c in the intermembrane space (IMS) are transferred via the dinuclear copper A center (CU(A)) of subunit 2 and heme A of subunit 1 to the active site in subunit 1, a binuclear center (BNC) formed by heme A3 and copper B (CU(B)). The BNC reduces molecular oxygen to 2 water molecules using 4 electrons from cytochrome c in the IMS and 4 protons from the mitochondrial matrix. The protein is Cytochrome c oxidase subunit 7C, mitochondrial (COX7C) of Carlito syrichta (Philippine tarsier).